Here is a 483-residue protein sequence, read N- to C-terminus: Regulatory protein ViaA (483 aa).

Belongs to the ViaA family. As to quaternary structure, homodimer. Interacts with RavA.

Its subcellular location is the cytoplasm. Functionally, component of the RavA-ViaA chaperone complex, which may act on the membrane to optimize the function of some of the respiratory chains. ViaA stimulates the ATPase activity of RavA. The polypeptide is Regulatory protein ViaA (Escherichia coli O9:H4 (strain HS)).